We begin with the raw amino-acid sequence, 236 residues long: Thioredoxin-like 2-2, chloroplastic (236 aa).

Residues 1–82 constitute a chloroplast transit peptide; sequence MAGVVRLTTT…LRRPKSQVVR (82 aa). In terms of domain architecture, Thioredoxin spans 83 to 220; sequence VKVDENVAET…QLELGITLQT (138 aa). Residues cysteine 135 and cysteine 138 each act as nucleophile in the active site. The cysteines at positions 135 and 138 are disulfide-linked.

This sequence belongs to the thioredoxin family.

It localises to the plastid. The protein localises to the chloroplast. Functionally, thiol-disulfide oxidoreductase that may participate in various redox reactions. Possesses insulin disulfide bonds reducing activity. The sequence is that of Thioredoxin-like 2-2, chloroplastic from Arabidopsis thaliana (Mouse-ear cress).